Consider the following 1442-residue polypeptide: Protein patched homolog 1 (1442 aa).

Positions 1-45 (MASAADALEPESGSSTAGGGSHPVRAARSARGRRRRSGGTRRAAA) are disordered. At 1 to 101 (MASAADALEP…GCYIQKNCGK (101 aa)) the chain is on the cytoplasmic side. Over residues 28–39 (RSARGRRRRSGG) the composition is skewed to basic residues. Residues 102-122 (FLVVGLLYSAFAVGLRAANLE) form a helical membrane-spanning segment. Residues 123–436 (TNVEELWVEV…LDDILKSFSD (314 aa)) lie on the Extracellular side of the membrane. Asn-141, Asn-312, Asn-349, and Asn-414 each carry an N-linked (GlcNAc...) asparagine glycan. The chain crosses the membrane as a helical span at residues 437–457 (VSVIRVASGYLLMLAYACLTM). The SSD domain maps to 438 to 598 (SVIRVASGYL…LLIFPAILSM (161 aa)). Residues 458-472 (LRWDCAKSQGAVGLA) are Cytoplasmic-facing. Residues 473–493 (GVLLVALSVAAGLGLCSLIGI) traverse the membrane as a helical segment. The Extracellular portion of the chain corresponds to 494–501 (SFNAATTQ). The chain crosses the membrane as a helical span at residues 502–522 (VLPFLALGVGVDDVFLLAHAF). The Cytoplasmic portion of the chain corresponds to 523-547 (SETGQNKRIPFEDRTGECLKRTGAS). Residues 548 to 568 (VALTSISNVTAFFMAALIPIP) form a helical membrane-spanning segment. Residues 569-577 (ALRAFSLQA) are Extracellular-facing. The chain crosses the membrane as a helical span at residues 578 to 598 (AVVVVFNFAMVLLIFPAILSM). Topologically, residues 599–747 (DLYRREDRRL…HYAPFLLKPK (149 aa)) are cytoplasmic. A helical membrane pass occupies residues 748–768 (AKVVVIFLFLGLLGLSLYGTT). The Extracellular segment spans residues 769–1026 (RVRDGLDLTD…WEQYIGLRHW (258 aa)). N-linked (GlcNAc...) asparagine glycosylation is found at Asn-827, Asn-874, and Asn-999. The chain crosses the membrane as a helical span at residues 1027–1047 (LLLSISVVLACTFLVCALFLL). Over 1048–1053 (NPWTAG) the chain is Cytoplasmic. A helical membrane pass occupies residues 1054–1074 (IIVVVLALMTVELFGMMGLIG). The Extracellular portion of the chain corresponds to 1075–1082 (IKLSAVPV). Residues 1083-1101 (VILIASVGIGVEFTVHIAL) form a helical membrane-spanning segment. The Cytoplasmic portion of the chain corresponds to 1102 to 1120 (AFLTAIGDKNRRAVLALEH). Residues 1121–1141 (MFAPVLDGAVSTLLGVLMLAG) form a helical membrane-spanning segment. Residues 1142 to 1153 (SEFDFIVRYFFA) lie on the Extracellular side of the membrane. A helical membrane pass occupies residues 1154-1174 (VLAILTILGVLNGLVLLPVLL). At 1175–1442 (SFFGPYPEVS…EERTAGKISE (268 aa)) the chain is on the cytoplasmic side. Disordered regions lie at residues 1188-1231 (GRNR…TTVS) and 1266-1338 (STVV…LNHK). Low complexity predominate over residues 1217–1226 (SDSSDSEYSS). Polar residues predominate over residues 1276–1293 (QSSPRLQSNPEAGTQQVW).

Belongs to the patched family. Glycosylation is necessary for SHH binding. As to expression, expression is seen in the embryonic neural tube, sclerotome, visceral mesoderm, and limb bud.

The protein localises to the membrane. Functionally, acts as a receptor for sonic hedgehog (SHH), indian hedgehog (IHH) and desert hedgehog (DHH). Associates with the smoothened protein (SMO) to transduce the hedgehog's proteins signal. In Gallus gallus (Chicken), this protein is Protein patched homolog 1 (PTCH1).